The following is a 156-amino-acid chain: Ribosomal RNA large subunit methyltransferase H (156 aa).

S-adenosyl-L-methionine-binding positions include L73, G104, and 123–128 (LSPLTL).

The protein belongs to the RNA methyltransferase RlmH family. In terms of assembly, homodimer.

The protein localises to the cytoplasm. It catalyses the reaction pseudouridine(1915) in 23S rRNA + S-adenosyl-L-methionine = N(3)-methylpseudouridine(1915) in 23S rRNA + S-adenosyl-L-homocysteine + H(+). Specifically methylates the pseudouridine at position 1915 (m3Psi1915) in 23S rRNA. The polypeptide is Ribosomal RNA large subunit methyltransferase H (Pectobacterium carotovorum subsp. carotovorum (strain PC1)).